A 728-amino-acid polypeptide reads, in one-letter code: Double-strand break repair protein mre-11 (728 aa).

A compositionally biased stretch (acidic residues) spans 1–12; the sequence is MCGSDDSFDDFV. A disordered region spans residues 1 to 45; sequence MCGSDDSFDDFVPDSQEPASSRTRNQDHLDDDEVPCSQRPDAAND. Residues aspartate 73, histidine 75, aspartate 113, and asparagine 181 each contribute to the Mn(2+) site. Histidine 182 acts as the Proton donor in catalysis. Residues histidine 269, histidine 301, and histidine 303 each coordinate Mn(2+). The segment at 601–728 is disordered; the sequence is KNPVADVEME…PSKKRDLSFF (128 aa). A compositionally biased stretch (acidic residues) spans 607–616; sequence VEMEEDEDDP. The span at 622–632 shows a compositional bias: polar residues; the sequence is PQSTSRTNYAS. Positions 634–645 are enriched in acidic residues; the sequence is SEDEVANSDEEM.

Belongs to the MRE11/RAD32 family. As to quaternary structure, component of the MRN complex composed of two heterodimers rad-50 and mre-11 associated with a single nbs-1. The cofactor is Mn(2+).

It localises to the nucleus. It is found in the chromosome. Its function is as follows. Core component of the MRN complex, which plays a central role in double-strand break (DSB) repair, DNA recombination, maintenance of telomere integrity and meiosis. The MRN complex is involved in the repair of DNA double-strand breaks (DSBs) via homologous recombination (HR), an error-free mechanism which primarily occurs during S and G2 phases. The complex (1) mediates the end resection of damaged DNA, which generates proper single-stranded DNA, a key initial steps in HR, and is (2) required for the recruitment of other repair factors and efficient activation of ATM and ATR upon DNA damage. Within the MRN complex, mre-11 possesses both single-strand endonuclease activity and double-strand-specific 3'-5' exonuclease activity. Mre-11 first endonucleolytically cleaves the 5' strand at DNA DSB ends to prevent non-homologous end joining (NHEJ) and licence HR. It then generates a single-stranded DNA gap via 3' to 5' exonucleolytic degradation, which is required for single-strand invasion and recombination. Required for meiotic crossing over and chiasma formation. Pachytene morphology and homolog pairing are normal. Vital in long term for maintenance of reproductive capacity of subsequent generations. In Caenorhabditis elegans, this protein is Double-strand break repair protein mre-11.